The sequence spans 78 residues: DNA-directed RNA polymerase subunit Rpo5 (78 aa).

The protein belongs to the archaeal Rpo5/eukaryotic RPB5 RNA polymerase subunit family. As to quaternary structure, part of the RNA polymerase complex.

The protein localises to the cytoplasm. The enzyme catalyses RNA(n) + a ribonucleoside 5'-triphosphate = RNA(n+1) + diphosphate. Its function is as follows. DNA-dependent RNA polymerase (RNAP) catalyzes the transcription of DNA into RNA using the four ribonucleoside triphosphates as substrates. The chain is DNA-directed RNA polymerase subunit Rpo5 from Methanocaldococcus jannaschii (strain ATCC 43067 / DSM 2661 / JAL-1 / JCM 10045 / NBRC 100440) (Methanococcus jannaschii).